Here is a 580-residue protein sequence, read N- to C-terminus: High affinity choline transporter 1 (580 aa).

Residues 1–6 (MPFHVE) lie on the Extracellular side of the membrane. A helical membrane pass occupies residues 7-27 (GLVAIILFYLLIFLVGIWAAW). Over 28–48 (KTKNSGNAEERSEAIIVGGRD) the chain is Cytoplasmic. The helical transmembrane segment at 49–69 (IGLLVGGFTMTATWVGGGYIN) threads the bilayer. Residues 70–81 (GTAEAVYGPGCG) lie on the Extracellular side of the membrane. Residues 82-102 (LAWAQAPIGYSLSLILGGLFF) traverse the membrane as a helical segment. At 103 to 125 (AKPMRSKGYVTMLDPFQQIYGKR) the chain is on the cytoplasmic side. Residues 126-146 (MGGLLFIPALMGEMFWAAAIF) form a helical membrane-spanning segment. At 147 to 164 (SALGATISVIIDVDVNIS) the chain is on the extracellular side. A helical transmembrane segment spans residues 165–185 (VIVSALIAILYTLVGGLYSVA). Residues 186 to 191 (YTDVVQ) lie on the Cytoplasmic side of the membrane. Residues 192 to 212 (LFCIFIGLWISVPFALSHPAV) form a helical membrane-spanning segment. Topologically, residues 213–237 (TDIGFTAVHAKYQSPWLGTIESVEV) are extracellular. A helical transmembrane segment spans residues 238-258 (YTWLDNFLLLMLGGIPWQAYF). The Cytoplasmic portion of the chain corresponds to 259-274 (QRVLSSSSATYAQVLS). Residues 275–295 (FLAAFGCLVMALPAICIGAIG) traverse the membrane as a helical segment. Residues 296 to 317 (ASTDWNQTAYGFPDPKTKEEAD) lie on the Extracellular side of the membrane. Asn-301 carries an N-linked (GlcNAc...) asparagine glycan. The chain crosses the membrane as a helical span at residues 318–338 (MILPIVLQYLCPVYISFFGLG). Over 339–376 (AVSAAVMSSADSSILSASSMFARNIYQLSFRQNASDKE) the chain is Cytoplasmic. A helical transmembrane segment spans residues 377 to 397 (IVWVMRITVFVFGASATAMAL). The Extracellular segment spans residues 398–406 (LTKTVYGLW). A helical transmembrane segment spans residues 407–427 (YLSSDLVYIIIFPQLLCVLFI). Topologically, residues 428–435 (KGTNTYGA) are cytoplasmic. A helical transmembrane segment spans residues 436 to 456 (VAGYIFGLFLRITGGEPYLYL). Residues 457–481 (QPLIFYPGYYPDKNGIYNQRFPFKT) lie on the Extracellular side of the membrane. The chain crosses the membrane as a helical span at residues 482–502 (LSMVTSFFTNICVSYLAKYLF). A mediates interaction with SEC14L1 region spans residues 502–580 (FESGTLPPKL…EGSGTEDNLQ (79 aa)). The Cytoplasmic segment spans residues 503-580 (ESGTLPPKLD…EGSGTEDNLQ (78 aa)). The Dileucine-like motif motif lies at 527–532 (DKTILV).

This sequence belongs to the sodium:solute symporter (SSF) (TC 2.A.21) family. In terms of assembly, homooligomerizes at cell surface. Interacts with SEC14L1; may regulate SLC5A7. Post-translationally, phosphorylated. Expressed in basal forebrain, brain stem, spinal chord, and striatum. Specific for cholinergic neurons.

It localises to the presynaptic cell membrane. Its subcellular location is the cell projection. The protein localises to the axon. It is found in the early endosome membrane. The protein resides in the cytoplasmic vesicle. It localises to the secretory vesicle. Its subcellular location is the synaptic vesicle membrane. It catalyses the reaction choline(out) + n Na(+)(out) = choline(in) + n Na(+)(in). Its activity is regulated as follows. Choline uptake activity is regulated by SLC5A7/CHT1 internalization (inactive form) from the cell surface and recycling of internalized SLC5A7/CHT1 into the cell surface (active form). Activated by extracellular chloride ion. Specifically inhibited by nanomolar concentrations of hemicholinium 3. Functionally, high-affinity Na(+)-coupled choline transmembrane symporter. Functions as an electrogenic, voltage-dependent transporter with variable charge/choline stoichiometry. Choline uptake and choline-induced current is also Cl(-)-dependent where Cl(-) is likely a regulatory ion rather than cotransported ion. Plays a critical role in acetylcholine (ACh) synthesis by taking up the substrate choline from the synaptic cleft into the presynaptic nerve terminals after neurotransmitter release. SLC5A7/CHT1-mediated choline high-affinity transport in cholinergic neurons is the rate-limiting step for production of ACh, thereby facilitating communication by subsequent action potentials. Localized predominantly in presynaptic terminal intracellular organelles, and translocated to the plasma membrane in active form in response to neuronal activity. In Rattus norvegicus (Rat), this protein is High affinity choline transporter 1.